The following is a 522-amino-acid chain: Subtilisin-like protease 10 (522 aa).

The first 19 residues, Met1–Ala19, serve as a signal peptide directing secretion. Positions Ala20–Gln117 are excised as a propeptide. Residues Ser36–Ile113 form the Inhibitor I9 domain. Residues Asn127–Thr405 enclose the Peptidase S8 domain. Residues Asp159 and His190 each act as charge relay system in the active site. N-linked (GlcNAc...) asparagine glycosylation occurs at Asn251. Ser348 functions as the Charge relay system in the catalytic mechanism. A compositionally biased stretch (polar residues) spans Ser383 to Leu397. The interval Ser383–Arg515 is disordered. Asn392 and Asn403 each carry an N-linked (GlcNAc...) asparagine glycan. The span at Ser432–Asn459 shows a compositional bias: pro residues.

This sequence belongs to the peptidase S8 family.

The protein resides in the secreted. In terms of biological role, secreted subtilisin-like serine protease with keratinolytic activity that contributes to pathogenicity. The protein is Subtilisin-like protease 10 (SUB10) of Trichophyton verrucosum (strain HKI 0517).